The following is a 545-amino-acid chain: Methionine--tRNA ligase (545 aa).

A 'HIGH' region motif is present at residues 15 to 25 (PYANGPIHIGH). The Zn(2+) site is built by Cys-146, Cys-149, Cys-159, and Cys-162. Positions 332 to 336 (KLSKS) match the 'KMSKS' region motif. An ATP-binding site is contributed by Lys-335.

It belongs to the class-I aminoacyl-tRNA synthetase family. MetG type 1 subfamily. Monomer. It depends on Zn(2+) as a cofactor.

It localises to the cytoplasm. The catalysed reaction is tRNA(Met) + L-methionine + ATP = L-methionyl-tRNA(Met) + AMP + diphosphate. Is required not only for elongation of protein synthesis but also for the initiation of all mRNA translation through initiator tRNA(fMet) aminoacylation. This is Methionine--tRNA ligase (metG) from Buchnera aphidicola subsp. Schizaphis graminum (strain Sg).